Here is a 219-residue protein sequence, read N- to C-terminus: Transmembrane emp24 domain-containing protein 10 (219 aa).

An N-terminal signal peptide occupies residues Met1 to Ala31. Residues Met1 to Glu142 are required for interaction with STX17. Over Ile32–Arg185 the chain is Lumenal. The GOLD domain maps to Arg41–Ser193. A required for TMED10 and TMED2 cis-Golgi network localization region spans residues Leu147 to Thr178. 2 positions are modified to dimethylated arginine: Arg171 and Arg176. Asn179 carries an N-linked (GlcNAc...) asparagine glycan. A helical membrane pass occupies residues Val186 to Phe206. Positions Gln204–Glu219 are interaction with COPG1. The Cytoplasmic segment spans residues Tyr207 to Glu219. Positions Tyr207 to Glu219 are interaction with ARF1 and IL1B. The COPII vesicle coat-binding motif lies at Phe211 to Phe212. A COPI vesicle coat-binding motif is present at residues Phe211–Glu219.

It belongs to the EMP24/GP25L family. As to quaternary structure, predominantly dimeric and to a lesser extent monomeric in the ER. Monomer and dimer in ERGIC and cis-Golgi network. Forms homooligomer (via GOLD domain); the assembly is promoted by direct binding with leaderless cargos and may form a protein channel that facilitates cargo entry into the ERGIC. Forms heterooligomeric complexes with other members of the p24 family such as TMED2, TMED7 and TMED9. Interacts (via GOLD domain) with TMED2 (via GOLD domain); the complex is required for export of TMED10 from the ER to the cis-Golgi network; the complex is proposed to be involved in cis-Golgi network dynamics and / or biogenesis. Associates with the COPI vesicle coat subunits (coatomer). Tetramerization of the cytoplasmic domain at the Golgi membrane in vitro; the complex is proposed to interact with COPI coatomer and induce budding of the vesicles. Interacts with COPG1; the interaction involves TMED10 homodimer. Interacts with ARF1 (GDP-bound); the interaction probably involves a TMED10 oligomer. Interacts with SEC23A, SEC24B, SEC24C and SEC24D components of the coat protein complex II/COPII, indicative of an association of TMED10 with the COPII vesicle coat. Interacts with CD59. Interacts with MPPE1/PGAP5; the complex might recruit and sort GPI-anchored proteins to the ER-exit site, or the interaction might lead to recycling of PGAP5 between the ER and the Golgi. Interacts with F2LR1/PAR2. Interacts with KDELR2/ERD2; the interaction is disrupted by KDELR2 ligand. Found in a complex composed at least of SURF4, TMED2 and TMED10. Associates with the presenilin-dependent gamma-secretase complex. Interacts with STX17; the interaction is direct. Interacts with IL-1; the interaction is direct. Interacts with RAB21 (active GTP-bound form); the interaction is indirect and regulates TMED10 abundance and localization at the Golgi.

It localises to the endoplasmic reticulum membrane. The protein localises to the endoplasmic reticulum-Golgi intermediate compartment membrane. The protein resides in the golgi apparatus membrane. It is found in the golgi apparatus. Its subcellular location is the cis-Golgi network membrane. It localises to the trans-Golgi network membrane. The protein localises to the cytoplasmic vesicle. The protein resides in the secretory vesicle membrane. It is found in the cell membrane. Its subcellular location is the melanosome. Cargo receptor involved in protein vesicular trafficking and quality control in the endoplasmic reticulum (ER) and Golgi. The p24 protein family is a group of transmembrane proteins that bind coat protein complex I/COPI and coat protein complex II/COPII involved in vesicular trafficking between the membranes. Acts at the lumenal side for incorporation of secretory cargo molecules into transport vesicles and involved in vesicle coat formation at the cytoplasmic side. Mainly functions in the early secretory pathway and cycles between the ER, ER-Golgi intermediate compartment (ERGIC) and Golgi, mediating cargo transport through COPI and COPII-coated vesicles. In COPII vesicle-mediated anterograde transport, involved in the transport of GPI-anchored proteins by acting together with TMED2 as their cargo receptor; the function specifically implies SEC24C and SEC24D of the COPII vesicle coat and lipid raft-like microdomains of the ER. Recognizes GPI anchors structural remodeled in the ER by the GPI inositol-deacylase/PGAP1 and the metallophosphoesterase MPPE1/PGAP5. In COPI vesicle-mediated retrograde transport, involved in the biogenesis of COPI vesicles and vesicle coat recruitment. Involved in trafficking of amyloid beta A4 protein and soluble APP-beta release (independent from the modulation of gamma-secretase activity). Involved in the KDELR2-mediated retrograde transport of the toxin A subunit (CTX-A-K63)together with COPI and the COOH terminus of KDELR2. On Golgi membranes, acts as a primary receptor for ARF1-GDP, a GTP-binding protein involved in COPI-vesicle formation. Increases coatomer-dependent GTPase-activating activity of ARFGAP2 which mediates the hydrolysis of ARF1-bound GTP and therefore modulates protein trafficking from the Golgi apparatus. Involved in the exocytic trafficking of G protein-coupled receptors F2LR1/PAR2 (trypsin and tryspin-like enzyme receptor), OPRM1 (opioid receptor) and P2RY4 (UTD and UDP receptor) from the Golgi to the plasma membrane, thus contributing to receptor resensitization. In addition to its cargo receptor activity, may also act as a protein channel after oligomerization, facilitating the post-translational entry of leaderless cytoplasmic cargo into the ERGIC. Involved in the translocation into ERGIC, the vesicle entry and the secretion of leaderless cargos (lacking the secretion signal sequence), including the mature form of interleukin 1/IL-1 family members, the alpha-crystallin B chain HSPB5, the carbohydrate-binding proteins galectin-1/LGALS1 and galectin-3/LGALS3, the microtubule-associated protein Tau/MAPT, and the annexin A1/ANXA1; the translocation process is dependent on cargo protein unfolding and enhanced by chaperones HSP90AB1 and HSP90B1/GRP9. Could also associates with the presenilin-dependent gamma-secretase complex in order to regulate gamma-cleavages of the amyloid beta A4 protein to yield amyloid-beta 40/Abeta40. This chain is Transmembrane emp24 domain-containing protein 10 (TMED10), found in Mesocricetus auratus (Golden hamster).